The primary structure comprises 625 residues: 1-deoxy-D-xylulose-5-phosphate synthase 1 (625 aa).

Residues His74 and 115–117 (GHT) each bind thiamine diphosphate. A Mg(2+)-binding site is contributed by Asp146. Thiamine diphosphate is bound by residues 147-148 (GS), Asn175, Tyr286, and Glu368. Asn175 contributes to the Mg(2+) binding site.

It belongs to the transketolase family. DXPS subfamily. Homodimer. Mg(2+) is required as a cofactor. The cofactor is thiamine diphosphate.

It catalyses the reaction D-glyceraldehyde 3-phosphate + pyruvate + H(+) = 1-deoxy-D-xylulose 5-phosphate + CO2. The protein operates within metabolic intermediate biosynthesis; 1-deoxy-D-xylulose 5-phosphate biosynthesis; 1-deoxy-D-xylulose 5-phosphate from D-glyceraldehyde 3-phosphate and pyruvate: step 1/1. Functionally, catalyzes the acyloin condensation reaction between C atoms 2 and 3 of pyruvate and glyceraldehyde 3-phosphate to yield 1-deoxy-D-xylulose-5-phosphate (DXP). This Geobacter metallireducens (strain ATCC 53774 / DSM 7210 / GS-15) protein is 1-deoxy-D-xylulose-5-phosphate synthase 1.